The following is a 144-amino-acid chain: Large-conductance mechanosensitive channel (144 aa).

A run of 2 helical transmembrane segments spans residues 21 to 41 (VGIIIGAAFGKIVSSLVANVI) and 76 to 96 (GIFLQNIFDFIIVAFAVFCII). The disordered stretch occupies residues 105 to 144 (QRGGKTRRAVQTECGRDAAYRDPRSLETTKQRHGAGYNDD). The span at 118-134 (CGRDAAYRDPRSLETTK) shows a compositional bias: basic and acidic residues.

This sequence belongs to the MscL family. In terms of assembly, homopentamer.

The protein resides in the cell inner membrane. Functionally, channel that opens in response to stretch forces in the membrane lipid bilayer. May participate in the regulation of osmotic pressure changes within the cell. This chain is Large-conductance mechanosensitive channel, found in Sodalis glossinidius (strain morsitans).